We begin with the raw amino-acid sequence, 95 residues long: Histone-like DNA-binding protein (95 aa).

Belongs to the bacterial histone-like protein family.

This chain is Histone-like DNA-binding protein, found in Rickettsia typhi (strain ATCC VR-144 / Wilmington).